Reading from the N-terminus, the 586-residue chain is A-type ATP synthase subunit A (586 aa).

232 to 239 (GPFGSGKT) is an ATP binding site.

Belongs to the ATPase alpha/beta chains family. In terms of assembly, has multiple subunits with at least A(3), B(3), C, D, E, F, H, I and proteolipid K(x).

The protein resides in the cell membrane. The enzyme catalyses ATP + H2O + 4 H(+)(in) = ADP + phosphate + 5 H(+)(out). Functionally, component of the A-type ATP synthase that produces ATP from ADP in the presence of a proton gradient across the membrane. The A chain is the catalytic subunit. In Methanococcus maripaludis (strain DSM 14266 / JCM 13030 / NBRC 101832 / S2 / LL), this protein is A-type ATP synthase subunit A.